Consider the following 358-residue polypeptide: Photosystem II protein D1 (358 aa).

3 consecutive transmembrane segments (helical) span residues 28–45 (YVGW…AAAI), 117–132 (HFLI…QWEL), and 141–155 (WICV…AAFA). A chlorophyll a-binding site is contributed by His117. Pheophytin a is bound at residue Trp125. The [CaMn4O5] cluster site is built by Asp169 and Glu188. Residues 196 to 217 (FHMIGVAGMFGGSLFSAMHGSL) traverse the membrane as a helical segment. Chlorophyll a is bound at residue His197. Residues His214 and 263 to 264 (SF) each bind a quinone. His214 serves as a coordination point for Fe cation. His271 lines the Fe cation pocket. The chain crosses the membrane as a helical span at residues 273 to 287 (FLAAWPVICIWITSL). 4 residues coordinate [CaMn4O5] cluster: His331, Glu332, Asp341, and Ala343. The propeptide occupies 344-358 (AAESTPVALIAPAIG).

Belongs to the reaction center PufL/M/PsbA/D family. PSII is composed of 1 copy each of membrane proteins PsbA, PsbB, PsbC, PsbD, PsbE, PsbF, PsbH, PsbI, PsbJ, PsbK, PsbL, PsbM, PsbT, PsbX, PsbY, Psb30/Ycf12, peripheral proteins PsbO, CyanoQ (PsbQ), PsbU, PsbV and a large number of cofactors. It forms dimeric complexes. The D1/D2 heterodimer binds P680, chlorophylls that are the primary electron donor of PSII, and subsequent electron acceptors. It shares a non-heme iron and each subunit binds pheophytin, quinone, additional chlorophylls, carotenoids and lipids. D1 provides most of the ligands for the Mn4-Ca-O5 cluster of the oxygen-evolving complex (OEC). There is also a Cl(-1) ion associated with D1 and D2, which is required for oxygen evolution. The PSII complex binds additional chlorophylls, carotenoids and specific lipids. is required as a cofactor. Post-translationally, tyr-160 forms a radical intermediate that is referred to as redox-active TyrZ, YZ or Y-Z. In terms of processing, C-terminally processed by CtpA; processing is essential to allow assembly of the oxygen-evolving complex and thus photosynthetic growth.

The protein localises to the cellular thylakoid membrane. It carries out the reaction 2 a plastoquinone + 4 hnu + 2 H2O = 2 a plastoquinol + O2. Its function is as follows. Photosystem II (PSII) is a light-driven water:plastoquinone oxidoreductase that uses light energy to abstract electrons from H(2)O, generating O(2) and a proton gradient subsequently used for ATP formation. It consists of a core antenna complex that captures photons, and an electron transfer chain that converts photonic excitation into a charge separation. The D1/D2 (PsbA/PsbD) reaction center heterodimer binds P680, the primary electron donor of PSII as well as several subsequent electron acceptors. This is Photosystem II protein D1 from Prochlorococcus marinus (strain MIT 9313).